The chain runs to 290 residues: Nucleotide-binding protein Clos_0574 (290 aa).

Position 8 to 15 (glycine 8 to serine 15) interacts with ATP. Aspartate 59–glycine 62 is a GTP binding site.

The protein belongs to the RapZ-like family.

In terms of biological role, displays ATPase and GTPase activities. This Alkaliphilus oremlandii (strain OhILAs) (Clostridium oremlandii (strain OhILAs)) protein is Nucleotide-binding protein Clos_0574.